A 669-amino-acid polypeptide reads, in one-letter code: JmjC domain-containing histone demethylation protein 1 (669 aa).

The segment at 1 to 61 (MTAVAASSRV…RRKKPRTELV (61 aa)) is disordered. 2 stretches are compositionally biased toward polar residues: residues 16–27 (ASSSAHPRTLRS) and 36–49 (HDSS…QSKQ). The segment at 65–126 (ELDCAACPAV…KWYCQPCITR (62 aa)) adopts a PHD-type zinc-finger fold. Disordered stretches follow at residues 131 to 150 (FESG…RPPR) and 220 to 256 (PPDR…QATH). Positions 246-255 (KPARAKKQAT) are enriched in basic residues. A JmjC domain is found at 332–494 (VTGTPMQAYV…TQWKLVEIEE (163 aa)). Fe cation-binding residues include His390 and Asp392. Lys407 contributes to the substrate binding site. His462 lines the Fe cation pocket.

This sequence belongs to the JHDM1 histone demethylase family. Fe(2+) serves as cofactor.

It is found in the nucleus. It carries out the reaction N(6),N(6)-dimethyl-L-lysyl(36)-[histone H3] + 2 2-oxoglutarate + 2 O2 = L-lysyl(36)-[histone H3] + 2 formaldehyde + 2 succinate + 2 CO2. Its function is as follows. Histone demethylase that specifically demethylates 'Lys-36' of histone H3, thereby playing a central role in histone code. The protein is JmjC domain-containing histone demethylation protein 1 (JHD1) of Mycosarcoma maydis (Corn smut fungus).